The chain runs to 862 residues: DNA topoisomerase 3-beta-1 (862 aa).

One can recognise a Toprim domain in the interval 3 to 153 (TVLMVAEKPS…EKTVFRARFS (151 aa)). The region spanning 171-593 (DHNEALSVDA…HTLDVFKRKF (423 aa)) is the Topo IA-type catalytic domain. The O-(5'-phospho-DNA)-tyrosine intermediate role is filled by Y336. Positions 821–851 (PMHRGGPGRRQGRGRGRARRPPGKPNPRRPK) are enriched in basic residues. Residues 821–854 (PMHRGGPGRRQGRGRGRARRPPGKPNPRRPKDKM) form a disordered region.

This sequence belongs to the type IA topoisomerase family. Isoform 1 is found in testis, heart and skeletal muscle. A 4 kb transcript which probably represents isoform 2 is found in thymus, kidney and pancreas.

It catalyses the reaction ATP-independent breakage of single-stranded DNA, followed by passage and rejoining.. In terms of biological role, releases the supercoiling and torsional tension of DNA introduced during the DNA replication and transcription by transiently cleaving and rejoining one strand of the DNA duplex. Introduces a single-strand break via transesterification at a target site in duplex DNA. The scissile phosphodiester is attacked by the catalytic tyrosine of the enzyme, resulting in the formation of a DNA-(5'-phosphotyrosyl)-enzyme intermediate and the expulsion of a 3'-OH DNA strand. The free DNA strand than undergoes passage around the unbroken strand thus removing DNA supercoils. Finally, in the religation step, the DNA 3'-OH attacks the covalent intermediate to expel the active-site tyrosine and restore the DNA phosphodiester backbone. Possesses negatively supercoiled DNA relaxing activity. This is DNA topoisomerase 3-beta-1 (TOP3B) from Homo sapiens (Human).